A 457-amino-acid chain; its full sequence is L-lysine-epsilon aminotransferase (457 aa).

Pyridoxal 5'-phosphate contacts are provided by G131 and A132. The 2-oxoglutarate site is built by R172 and Q278. R172 is a binding site for L-lysine. Residue Q278 participates in pyridoxal 5'-phosphate binding. The residue at position 304 (K304) is an N6-(pyridoxal phosphate)lysine. Position 427 (R427) interacts with 2-oxoglutarate.

Belongs to the class-III pyridoxal-phosphate-dependent aminotransferase family. In terms of assembly, monomer. Pyridoxal 5'-phosphate is required as a cofactor.

The enzyme catalyses L-lysine + 2-oxoglutarate = (S)-2-amino-6-oxohexanoate + L-glutamate. The protein operates within antibiotic biosynthesis; cephamycin C biosynthesis. Its activity is regulated as follows. Activity is induced in the presence of high concentrations of lysine, but not by L-alpha-aminoadipic acid. Not repressed by ammonium ions. Functionally, catalyzes the transfer of the terminal amino group of L-lysine to alpha-ketoglutarate to yield L-glutamate and 2-aminoadipate 6-semialdehyde ((S)-2-amino-6-oxohexanoate), which is spontaneously converted to the dehydrated form 1-piperideine 6-carboxylate. Shows a high specificity for L-lysine as substrate although L-ornithine can also be used, leading to the formation of an o-aminobenzaldehyde reactive compound. Only cis-oxaloacetate and pyruvate can replace alpha-ketoglutarate, but with very low efficiency. The chain is L-lysine-epsilon aminotransferase from Streptomyces clavuligerus.